Consider the following 554-residue polypeptide: Heterochromatin protein 1-binding protein 3 (554 aa).

Ala2 carries the post-translational modification N-acetylalanine. Ser6 is subject to Phosphoserine. Disordered regions lie at residues 30–136 (LGEK…KTIP) and 142–161 (SASQ…SPRP). Residue Thr51 is modified to Phosphothreonine. Positions 60–71 (GEEEKPEPDGSS) are enriched in acidic residues. A Glycyl lysine isopeptide (Lys-Gly) (interchain with G-Cter in SUMO2) cross-link involves residue Lys64. 2 positions are modified to phosphothreonine: Glu72 and Thr85. The span at 72-93 (EESISTVEEQENETPPATSSEA) shows a compositional bias: polar residues. The span at 94–129 (EQPKGEPESGEKEENNNKSAEEPKKDEKDQSKEKEK) shows a compositional bias: basic and acidic residues. Residue Lys97 forms a Glycyl lysine isopeptide (Lys-Gly) (interchain with G-Cter in SUMO2) linkage. Residues 142–156 (SASQLARAQRQTPMA) show a composition bias toward polar residues. Phosphoserine occurs at positions 144, 157, and 158. In terms of domain architecture, H15 1 spans 159–234 (PRPKMDAILT…GASGSFVVVQ (76 aa)). Lys192 is modified (N6-acetyllysine). Residues 229 to 254 (SFVVVQKSKPPQKSKNRKKGSALDPE) form a disordered region. Over residues 238-248 (PPQKSKNRKKG) the composition is skewed to basic residues. Ser249 carries the phosphoserine modification. A PxVxL motif motif is present at residues 255–259 (PQVKL). H15 domains follow at residues 255–330 (PQVK…QLKK) and 337–413 (LGGS…QLSF). Lys258 participates in a covalent cross-link: Glycyl lysine isopeptide (Lys-Gly) (interchain with G-Cter in SUMO2). A disordered region spans residues 420–554 (GVLFPKKESG…AMKKSFKTKK (135 aa)). Acidic residues predominate over residues 430–451 (GSDDEDEDDDDDESSEDSEDEE). Phosphoserine occurs at positions 443, 444, and 447. Over residues 464-475 (AKSQGKTASMKQ) the composition is skewed to polar residues. 2 stretches are compositionally biased toward basic residues: residues 490–511 (GKVR…RKAR) and 544–554 (SAMKKSFKTKK).

Interacts (via PxVxL motif) with CBX5 (via Trp-174).

The protein resides in the nucleus. It is found in the chromosome. Component of heterochromatin that maintains heterochromatin integrity during G1/S progression and regulates the duration of G1 phase to critically influence cell proliferative capacity. May play a role in hypoxia-induced oncogenesis. This Mus musculus (Mouse) protein is Heterochromatin protein 1-binding protein 3 (Hp1bp3).